The chain runs to 58 residues: U7-ctenitoxin-Pr1a (58 aa).

Disulfide bonds link C2–C16, C9–C22, C13–C48, C15–C40, C18–C55, and C24–C38.

In terms of tissue distribution, expressed by the venom gland.

The protein resides in the secreted. Functionally, probable neurotoxin. This chain is U7-ctenitoxin-Pr1a, found in Phoneutria reidyi (Brazilian Amazonian armed spider).